Reading from the N-terminus, the 267-residue chain is Orotidine 5'-phosphate decarboxylase (267 aa).

Lys93 acts as the Proton donor in catalysis.

This sequence belongs to the OMP decarboxylase family. Type 2 subfamily.

The catalysed reaction is orotidine 5'-phosphate + H(+) = UMP + CO2. It participates in pyrimidine metabolism; UMP biosynthesis via de novo pathway; UMP from orotate: step 2/2. The chain is Orotidine 5'-phosphate decarboxylase from Herpetosiphon aurantiacus (strain ATCC 23779 / DSM 785 / 114-95).